The primary structure comprises 220 residues: Claudin-22 (220 aa).

Residues 1–10 (MGLVFRTATQ) are Cytoplasmic-facing. Residues 11–31 (AAALLLSLLGWVLSCLTNYLP) form a helical membrane-spanning segment. Topologically, residues 32–81 (HWKNLNLELNEMENWTMGLWKSCVIQEEVGRQCKDFDSFLALPAELQVSR) are extracellular. The helical transmembrane segment at 82-102 (VLMSLCNGLGLLGLLASGCGL) threads the bilayer. Residues 103–120 (DCLRLGETQEGLKKRLLT) lie on the Cytoplasmic side of the membrane. Residues 121-141 (LGGTLLWTSGVMVLVPVSWVA) traverse the membrane as a helical segment. Residues 142 to 164 (HKTVREFWDETMPEIVPRWEFGE) lie on the Extracellular side of the membrane. Residues 165–185 (ALFLGWFAGFCLVLGGCVLHC) form a helical membrane-spanning segment. Over 186–220 (AACWSPAPAASSHYAVAGPRDHQQHLELKQANPEI) the chain is Cytoplasmic.

The protein belongs to the claudin family.

It is found in the cell junction. Its subcellular location is the tight junction. The protein resides in the cell membrane. Its function is as follows. Plays a major role in tight junction-specific obliteration of the intercellular space, through calcium-independent cell-adhesion activity. The chain is Claudin-22 (Cldn22) from Mus musculus (Mouse).